A 200-amino-acid chain; its full sequence is Alpha/beta-tubulin-N-acetyltransferase 9 (200 aa).

Positions 34–181 (ETLRELTASE…HEVTLERPIT (148 aa)) constitute an N-acetyltransferase domain.

The protein belongs to the acetyltransferase family. GNAT subfamily. Interacts with microtubules as well as alpha/beta-tubulin heterodimers.

Its subcellular location is the nucleus. The protein resides in the cytoplasm. It is found in the cytoskeleton. The protein localises to the spindle. It localises to the spindle pole. It carries out the reaction N-terminal L-methionyl-[tubulin] + acetyl-CoA = N-terminal N(alpha)-acetyl-L-methionyl-[tubulin] + CoA + H(+). N-acetyltransferase that mediates the acetylation of the N-terminal residues of alpha- and beta-tubulin. Required for microtubule stability and inhibition of JNK signaling to promote cell survival during development, possibly acting independently of its N-acetyltransferase activity. Necessary for the stabilization of spindle microtubules and for mitosis progression. Regulates microtubule stability by inhibiting Spastin-mediated depolymerization and promoting Eb1-mediated polymerization. This Drosophila melanogaster (Fruit fly) protein is Alpha/beta-tubulin-N-acetyltransferase 9.